The primary structure comprises 885 residues: Envelope glycoprotein gp160 (885 aa).

The N-terminal stretch at 1-23 (MGCLGNQLLIALLLVSVLEICCV) is a signal peptide. The Extracellular segment spans residues 24-700 (QYVTVFYGVP…TSWIRYIQYG (677 aa)). A glycan (N-linked (GlcNAc...) asparagine; by host) is linked at Asn37. The cysteines at positions 44 and 57 are disulfide-linked. Residues Asn70, Asn114, Asn148, Asn156, Asn173, Asn186, Asn201, Asn213, Asn245, Asn255, Asn279, Asn285, Asn296, Asn307, Asn317, Asn372, and Asn378 are each glycosylated (N-linked (GlcNAc...) asparagine; by host). Cystine bridges form between Cys101-Cys221, Cys108-Cys212, Cys113-Cys170, Cys234-Cys264, and Cys244-Cys256. The segment at 113–169 (CNKTETDRWGLTGNAGTTTTAITTTATPSVAENVINESNPCIKNNSCAGLEQEPMIG) is V1. Residues 170–212 (CKFNMTGLNRDKKKEYNETWYSRDLICEQSANESESKCYMHHC) are V2. Residues 312–344 (CRRPENKTVLPVTIMSGLVFHSQPINERPKQAW) are V3. Cysteines 312 and 345 form a disulfide. 2 disulfide bridges follow: Cys396–Cys465 and Cys403–Cys438. Positions 403 to 438 (CKMNWFLNWVEDRDQKGGRWKQQNRKEQQKKNYVPC) are V4. N-linked (GlcNAc...) asparagine; by host glycans are attached at residues Asn466, Asn482, and Asn485. Residues 481-488 (SNETNITM) are V5. The segment at 532 to 552 (GVFVLGFLGFLATAGSAMGAA) is fusion peptide. Residues 595–611 (LQTRVTAIEKYLKDQAQ) are immunosuppression. Asn631, Asn640, and Asn656 each carry an N-linked (GlcNAc...) asparagine; by host glycan. Positions 640-672 (NMTWQEWERQVDFLEANITQLLEEAQIQQEKNM) form a coiled coil. The MPER; binding to GalCer stretch occupies residues 677 to 698 (KLNSWDIFGNWFDLTSWIRYIQ). The helical transmembrane segment at 701-721 (VLIVLGVIGLRIVIYVVQMLA) threads the bilayer. Topologically, residues 722–885 (RLRQGYRPVF…IRQGLELTLL (164 aa)) are cytoplasmic. Positions 727 to 730 (YRPV) match the YXXV motif; contains endocytosis signal motif. The tract at residues 743–764 (IHKGQEPPTKEGEEGDGGDRGG) is disordered. Positions 745 to 764 (KGQEPPTKEGEEGDGGDRGG) are enriched in basic and acidic residues. A lipid anchor (S-palmitoyl cysteine; by host) is attached at Cys793. Positions 884–885 (LL) match the Di-leucine internalization motif motif.

As to quaternary structure, the mature envelope protein (Env) consists of a homotrimer of non-covalently associated gp120-gp41 heterodimers. The resulting complex protrudes from the virus surface as a spike. Interacts with host CD4 and CCR5. Gp120 also interacts with the C-type lectins CD209/DC-SIGN and CLEC4M/DC-SIGNR (collectively referred to as DC-SIGN(R)). In terms of assembly, the mature envelope protein (Env) consists of a homotrimer of non-covalently associated gp120-gp41 heterodimers. The resulting complex protrudes from the virus surface as a spike. Post-translationally, specific enzymatic cleavages in vivo yield mature proteins. Envelope glycoproteins are synthesized as an inactive precursor that is heavily N-glycosylated and processed likely by host cell furin in the Golgi to yield the mature SU and TM proteins. The cleavage site between SU and TM requires the minimal sequence [KR]-X-[KR]-R. In terms of processing, palmitoylation of the transmembrane protein and of Env polyprotein (prior to its proteolytic cleavage) is essential for their association with host cell membrane lipid rafts. Palmitoylation is therefore required for envelope trafficking to classical lipid rafts, but not for viral replication.

It is found in the virion membrane. It localises to the host cell membrane. Its subcellular location is the host endosome membrane. The surface protein gp120 (SU) attaches the virus to the host lymphoid cell by binding to the primary receptor CD4. This interaction induces a structural rearrangement creating a high affinity binding site for a chemokine coreceptor like CCR5. This peculiar 2 stage receptor-interaction strategy allows gp120 to maintain the highly conserved coreceptor-binding site in a cryptic conformation, protected from neutralizing antibodies. These changes are transmitted to the transmembrane protein gp41 and are thought to activate its fusogenic potential by unmasking its fusion peptide. Functionally, surface protein gp120 (SU) may target the virus to gut-associated lymphoid tissue (GALT) by binding host ITGA4/ITGB7 (alpha-4/beta-7 integrins), a complex that mediates T-cell migration to the GALT. Interaction between gp120 and ITGA4/ITGB7 would allow the virus to enter GALT early in the infection, infecting and killing most of GALT's resting CD4+ T-cells. This T-cell depletion is believed to be the major insult to the host immune system leading to AIDS. Its function is as follows. The surface protein gp120 is a ligand for CD209/DC-SIGN and CLEC4M/DC-SIGNR, which are respectively found on dendritic cells (DCs), and on endothelial cells of liver sinusoids and lymph node sinuses. These interactions allow capture of viral particles at mucosal surfaces by these cells and subsequent transmission to permissive cells. DCs are professional antigen presenting cells, critical for host immunity by inducing specific immune responses against a broad variety of pathogens. They act as sentinels in various tissues where they take up antigen, process it, and present it to T-cells following migration to lymphoid organs. SIV subverts the migration properties of dendritic cells to gain access to CD4+ T-cells in lymph nodes. Virus transmission to permissive T-cells occurs either in trans (without DCs infection, through viral capture and transmission), or in cis (following DCs productive infection, through the usual CD4-gp120 interaction), thereby inducing a robust infection. In trans infection, bound virions remain infectious over days and it is proposed that they are not degraded, but protected in non-lysosomal acidic organelles within the DCs close to the cell membrane thus contributing to the viral infectious potential during DCs' migration from the periphery to the lymphoid tissues. On arrival at lymphoid tissues, intact virions recycle back to DCs' cell surface allowing virus transmission to CD4+ T-cells. Virion capture also seems to lead to MHC-II-restricted viral antigen presentation, and probably to the activation of SIV-specific CD4+ cells. In terms of biological role, the transmembrane protein gp41 (TM) acts as a class I viral fusion protein. Under the current model, the protein has at least 3 conformational states: pre-fusion native state, pre-hairpin intermediate state, and post-fusion hairpin state. During fusion of viral and target intracellular membranes, the coiled coil regions (heptad repeats) assume a trimer-of-hairpins structure, positioning the fusion peptide in close proximity to the C-terminal region of the ectodomain. The formation of this structure appears to drive apposition and subsequent fusion of viral and target cell membranes. Complete fusion occurs in host cell endosomes. The virus undergoes clathrin-dependent internalization long before endosomal fusion, thus minimizing the surface exposure of conserved viral epitopes during fusion and reducing the efficacy of inhibitors targeting these epitopes. Membranes fusion leads to delivery of the nucleocapsid into the cytoplasm. The envelope glycoprotein gp160 precursor down-modulates cell surface CD4 antigen by interacting with it in the endoplasmic reticulum and blocking its transport to the cell surface. Functionally, the gp120-gp41 heterodimer allows rapid transcytosis of the virus through CD4 negative cells such as simple epithelial monolayers of the intestinal, rectal and endocervical epithelial barriers. Both gp120 and gp41 specifically recognize glycosphingolipids galactosyl-ceramide (GalCer) or 3' sulfo-galactosyl-ceramide (GalS) present in the lipid rafts structures of epithelial cells. Binding to these alternative receptors allows the rapid transcytosis of the virus through the epithelial cells. This transcytotic vesicle-mediated transport of virions from the apical side to the basolateral side of the epithelial cells does not involve infection of the cells themselves. The polypeptide is Envelope glycoprotein gp160 (env) (Cercopithecidae (Old World monkeys)).